The sequence spans 328 residues: Arabinose 5-phosphate isomerase KdsD (328 aa).

The SIS domain maps to 42–184 (CEKMFWCKGK…AVALLKARGF (143 aa)). Substrate-binding positions include 75 to 76 (GT), H82, H88, 114 to 123 (ALIPVLKRLH), 148 to 150 (KVA), T222, and D275. H82 contacts Zn(2+). Positions 210–268 (MHTGDEIPHVKKTASLRDALLEVTRKNLGMTVICDDNMMIEGIFTDGDLRRVFDMGVDV) constitute a CBS 1 domain. Residues 277–328 (MTPGGIRVRPGILAVEALNLMQSRHITSVMVADGDHLLGVLHMHDLLRAGVV) enclose the CBS 2 domain.

It belongs to the SIS family. GutQ/KpsF subfamily. In terms of assembly, homotetramer.

The enzyme catalyses D-arabinose 5-phosphate = D-ribulose 5-phosphate. It participates in carbohydrate biosynthesis; 3-deoxy-D-manno-octulosonate biosynthesis; 3-deoxy-D-manno-octulosonate from D-ribulose 5-phosphate: step 1/3. The protein operates within bacterial outer membrane biogenesis; lipopolysaccharide biosynthesis. Involved in the biosynthesis of 3-deoxy-D-manno-octulosonate (KDO), a unique 8-carbon sugar component of lipopolysaccharides (LPSs). Catalyzes the reversible aldol-ketol isomerization between D-ribulose 5-phosphate (Ru5P) and D-arabinose 5-phosphate (A5P). This is Arabinose 5-phosphate isomerase KdsD (kdsD) from Escherichia coli O6:H1 (strain CFT073 / ATCC 700928 / UPEC).